Reading from the N-terminus, the 905-residue chain is Translation initiation factor IF-2 (905 aa).

A compositionally biased stretch (basic and acidic residues) spans 50 to 62 (HYEAKGGEDKAAE). A disordered region spans residues 50 to 306 (HYEAKGGEDK…QKHEVGGVRL (257 aa)). The span at 63–75 (KNAPAATPASASK) shows a compositional bias: low complexity. The span at 89-125 (GPKPSAAPKPGAAPKPGGAPKPGGAPKPGATPKPGGA) shows a compositional bias: pro residues. A compositionally biased stretch (low complexity) spans 161 to 171 (PFSTGSSSDRP). The span at 233–276 (GSGGGGRGRGGRGGGPGHGGPGHGGFRGRGGRRGGTAGAFGRPG) shows a compositional bias: gly residues. Residues 280–290 (RRGKKSKRQKR) are compositionally biased toward basic residues. The span at 291-302 (HEFEEQQKHEVG) shows a compositional bias: basic and acidic residues. In terms of domain architecture, tr-type G spans 401-575 (KRPPVVTVMG…LTADAALELT (175 aa)). The interval 410 to 417 (GHVDHGKT) is G1. 410–417 (GHVDHGKT) serves as a coordination point for GTP. The segment at 435–439 (GITQG) is G2. The tract at residues 460–463 (DTPG) is G3. GTP-binding positions include 460 to 464 (DTPGH) and 514 to 517 (NKID). The G4 stretch occupies residues 514 to 517 (NKID). The tract at residues 550–552 (SAK) is G5.

This sequence belongs to the TRAFAC class translation factor GTPase superfamily. Classic translation factor GTPase family. IF-2 subfamily.

Its subcellular location is the cytoplasm. Its function is as follows. One of the essential components for the initiation of protein synthesis. Protects formylmethionyl-tRNA from spontaneous hydrolysis and promotes its binding to the 30S ribosomal subunits. Also involved in the hydrolysis of GTP during the formation of the 70S ribosomal complex. The polypeptide is Translation initiation factor IF-2 (Corynebacterium aurimucosum (strain ATCC 700975 / DSM 44827 / CIP 107346 / CN-1) (Corynebacterium nigricans)).